We begin with the raw amino-acid sequence, 353 residues long: Photosystem II protein D1 (353 aa).

Threonine 2 is subject to N-acetylthreonine. At threonine 2 the chain carries Phosphothreonine. The next 3 membrane-spanning stretches (helical) occupy residues 29 to 46 (YIGW…TATS), 118 to 133 (HFLL…EWEL), and 142 to 156 (WIAI…AATA). Histidine 118 lines the chlorophyll a pocket. Tyrosine 126 contributes to the pheophytin a binding site. [CaMn4O5] cluster contacts are provided by aspartate 170 and glutamate 189. Residues 197–218 (FHMLGVAGVFGGSLFSAMHGSL) form a helical membrane-spanning segment. Histidine 198 serves as a coordination point for chlorophyll a. Residues histidine 215 and 264-265 (SF) contribute to the a quinone site. Residue histidine 215 coordinates Fe cation. Fe cation is bound at residue histidine 272. Residues 274-288 (FLAAWPVIGIWFTAL) traverse the membrane as a helical segment. Positions 332, 333, 342, and 344 each coordinate [CaMn4O5] cluster. A propeptide spanning residues 345 to 353 (TFEVSATNA) is cleaved from the precursor.

This sequence belongs to the reaction center PufL/M/PsbA/D family. PSII is composed of 1 copy each of membrane proteins PsbA, PsbB, PsbC, PsbD, PsbE, PsbF, PsbH, PsbI, PsbJ, PsbK, PsbL, PsbM, PsbT, PsbX, PsbY, PsbZ, Psb30/Ycf12, at least 3 peripheral proteins of the oxygen-evolving complex and a large number of cofactors. It forms dimeric complexes. Requires The D1/D2 heterodimer binds P680, chlorophylls that are the primary electron donor of PSII, and subsequent electron acceptors. It shares a non-heme iron and each subunit binds pheophytin, quinone, additional chlorophylls, carotenoids and lipids. D1 provides most of the ligands for the Mn4-Ca-O5 cluster of the oxygen-evolving complex (OEC). There is also a Cl(-1) ion associated with D1 and D2, which is required for oxygen evolution. The PSII complex binds additional chlorophylls, carotenoids and specific lipids. as cofactor. Tyr-161 forms a radical intermediate that is referred to as redox-active TyrZ, YZ or Y-Z. Post-translationally, C-terminally processed by CTPA; processing is essential to allow assembly of the oxygen-evolving complex and thus photosynthetic growth.

It localises to the plastid membrane. It carries out the reaction 2 a plastoquinone + 4 hnu + 2 H2O = 2 a plastoquinol + O2. Its function is as follows. Photosystem II (PSII) is a light-driven water:plastoquinone oxidoreductase that uses light energy to abstract electrons from H(2)O, generating O(2) and a proton gradient subsequently used for ATP formation. It consists of a core antenna complex that captures photons, and an electron transfer chain that converts photonic excitation into a charge separation. The D1/D2 (PsbA/PsbD) reaction center heterodimer binds P680, the primary electron donor of PSII as well as several subsequent electron acceptors. The polypeptide is Photosystem II protein D1 (Cuscuta gronovii (Common dodder)).